Here is an 80-residue protein sequence, read N- to C-terminus: MSLLSALTSISKPMNTSSKSSVSSKNVSGLSMGSNSIACGSCGGSYGYPGAGLLAIVDLNVNIDIDINLSATRSYSCGCN.

The segment at 1 to 29 is disordered; the sequence is MSLLSALTSISKPMNTSSKSSVSSKNVSG. Low complexity predominate over residues 9 to 29; that stretch reads SISKPMNTSSKSSVSSKNVSG.

It belongs to the hssA/B family.

This is HssA/B-like protein 2 (hssl2) from Dictyostelium discoideum (Social amoeba).